The chain runs to 601 residues: Elongation factor 4 (601 aa).

In terms of domain architecture, tr-type G spans Asp2–Thr184. GTP-binding positions include Asp14 to Thr19 and Asn131 to Asp134.

It belongs to the TRAFAC class translation factor GTPase superfamily. Classic translation factor GTPase family. LepA subfamily.

The protein localises to the cell inner membrane. It catalyses the reaction GTP + H2O = GDP + phosphate + H(+). In terms of biological role, required for accurate and efficient protein synthesis under certain stress conditions. May act as a fidelity factor of the translation reaction, by catalyzing a one-codon backward translocation of tRNAs on improperly translocated ribosomes. Back-translocation proceeds from a post-translocation (POST) complex to a pre-translocation (PRE) complex, thus giving elongation factor G a second chance to translocate the tRNAs correctly. Binds to ribosomes in a GTP-dependent manner. The sequence is that of Elongation factor 4 from Polynucleobacter necessarius subsp. necessarius (strain STIR1).